The primary structure comprises 110 residues: NADH-quinone oxidoreductase subunit K (110 aa).

3 helical membrane-spanning segments follow: residues Leu13 to Met33, Ile41 to Val61, and Ile73 to Tyr93.

The protein belongs to the complex I subunit 4L family. In terms of assembly, NDH-1 is composed of 14 different subunits. Subunits NuoA, H, J, K, L, M, N constitute the membrane sector of the complex.

It localises to the cell inner membrane. It catalyses the reaction a quinone + NADH + 5 H(+)(in) = a quinol + NAD(+) + 4 H(+)(out). Its function is as follows. NDH-1 shuttles electrons from NADH, via FMN and iron-sulfur (Fe-S) centers, to quinones in the respiratory chain. The immediate electron acceptor for the enzyme in this species is believed to be ubiquinone. Couples the redox reaction to proton translocation (for every two electrons transferred, four hydrogen ions are translocated across the cytoplasmic membrane), and thus conserves the redox energy in a proton gradient. In Rickettsia typhi (strain ATCC VR-144 / Wilmington), this protein is NADH-quinone oxidoreductase subunit K.